Reading from the N-terminus, the 503-residue chain is Aspartyl/glutamyl-tRNA(Asn/Gln) amidotransferase subunit B (503 aa).

This sequence belongs to the GatB/GatE family. GatB subfamily. In terms of assembly, heterotrimer of A, B and C subunits.

It catalyses the reaction L-glutamyl-tRNA(Gln) + L-glutamine + ATP + H2O = L-glutaminyl-tRNA(Gln) + L-glutamate + ADP + phosphate + H(+). It carries out the reaction L-aspartyl-tRNA(Asn) + L-glutamine + ATP + H2O = L-asparaginyl-tRNA(Asn) + L-glutamate + ADP + phosphate + 2 H(+). Allows the formation of correctly charged Asn-tRNA(Asn) or Gln-tRNA(Gln) through the transamidation of misacylated Asp-tRNA(Asn) or Glu-tRNA(Gln) in organisms which lack either or both of asparaginyl-tRNA or glutaminyl-tRNA synthetases. The reaction takes place in the presence of glutamine and ATP through an activated phospho-Asp-tRNA(Asn) or phospho-Glu-tRNA(Gln). The polypeptide is Aspartyl/glutamyl-tRNA(Asn/Gln) amidotransferase subunit B (Cereibacter sphaeroides (strain ATCC 17025 / ATH 2.4.3) (Rhodobacter sphaeroides)).